A 316-amino-acid polypeptide reads, in one-letter code: Ribonuclease Z (316 aa).

Zn(2+) contacts are provided by His-59, His-61, Asp-63, His-64, His-135, Asp-203, and His-261. Asp-63 functions as the Proton acceptor in the catalytic mechanism.

It belongs to the RNase Z family. In terms of assembly, homodimer. It depends on Zn(2+) as a cofactor.

The catalysed reaction is Endonucleolytic cleavage of RNA, removing extra 3' nucleotides from tRNA precursor, generating 3' termini of tRNAs. A 3'-hydroxy group is left at the tRNA terminus and a 5'-phosphoryl group is left at the trailer molecule.. Zinc phosphodiesterase, which displays some tRNA 3'-processing endonuclease activity. Probably involved in tRNA maturation, by removing a 3'-trailer from precursor tRNA. This Nanoarchaeum equitans (strain Kin4-M) protein is Ribonuclease Z.